A 402-amino-acid chain; its full sequence is Deoxyguanosinetriphosphate triphosphohydrolase-like protein (402 aa).

One can recognise an HD domain in the interval 69-217 (RLTHSLEVAQ…AAIADDIAYD (149 aa)).

It belongs to the dGTPase family. Type 2 subfamily.

The polypeptide is Deoxyguanosinetriphosphate triphosphohydrolase-like protein (Bradyrhizobium diazoefficiens (strain JCM 10833 / BCRC 13528 / IAM 13628 / NBRC 14792 / USDA 110)).